Here is a 145-residue protein sequence, read N- to C-terminus: HTH-type transcriptional regulator MhqR (145 aa).

The HTH marR-type domain maps to 5–137 (SLKLFIVLSR…CTEMLKRVGL (133 aa)). A DNA-binding region (H-T-H motif) is located at residues 51-74 (LQQIGDKILLASGSITYVVDKLEQ).

Negatively regulates mhqA, mhqED, mhqNOP, and azoR2 which may contribute to the degradation of aromatic compounds. In Bacillus subtilis (strain 168), this protein is HTH-type transcriptional regulator MhqR (mhqR).